A 474-amino-acid polypeptide reads, in one-letter code: Serine--tRNA ligase (474 aa).

278–280 is a binding site for L-serine; it reads TAE. ATP is bound at residue 309-311; that stretch reads RSE. An L-serine-binding site is contributed by E332. An ATP-binding site is contributed by 396–399; sequence EISS. S432 is a binding site for L-serine.

It belongs to the class-II aminoacyl-tRNA synthetase family. Type-1 seryl-tRNA synthetase subfamily. As to quaternary structure, homodimer. The tRNA molecule binds across the dimer.

It localises to the cytoplasm. It carries out the reaction tRNA(Ser) + L-serine + ATP = L-seryl-tRNA(Ser) + AMP + diphosphate + H(+). It catalyses the reaction tRNA(Sec) + L-serine + ATP = L-seryl-tRNA(Sec) + AMP + diphosphate + H(+). Its pathway is aminoacyl-tRNA biosynthesis; selenocysteinyl-tRNA(Sec) biosynthesis; L-seryl-tRNA(Sec) from L-serine and tRNA(Sec): step 1/1. Catalyzes the attachment of serine to tRNA(Ser). Is also able to aminoacylate tRNA(Sec) with serine, to form the misacylated tRNA L-seryl-tRNA(Sec), which will be further converted into selenocysteinyl-tRNA(Sec). The protein is Serine--tRNA ligase of Caulobacter sp. (strain K31).